We begin with the raw amino-acid sequence, 566 residues long: NXPE family member 3 (566 aa).

An N-terminal signal peptide occupies residues 1-32 (MEKYFPKYVPFFSLLALSGLLYLLWSITSLES). N-linked (GlcNAc...) asparagine glycosylation is found at Asn64, Asn172, Asn242, Asn303, and Asn344.

Belongs to the NXPE family.

Its subcellular location is the secreted. The protein is NXPE family member 3 (nxpe3) of Danio rerio (Zebrafish).